Reading from the N-terminus, the 523-residue chain is Probable FAD synthase (523 aa).

Positions 20-111 (AIVVIGDEIL…TDQLHFSDEI (92 aa)) are molybdenum cofactor biosynthesis protein-like. Positions 332–489 (QIALSFNGGK…SLGGRDNTVK (158 aa)) are FAD synthase.

It in the N-terminal section; belongs to the MoaB/Mog family. In the C-terminal section; belongs to the PAPS reductase family. FAD1 subfamily. Mg(2+) is required as a cofactor.

The enzyme catalyses FMN + ATP + H(+) = FAD + diphosphate. The protein operates within cofactor biosynthesis; FAD biosynthesis; FAD from FMN: step 1/1. Catalyzes the adenylation of flavin mononucleotide (FMN) to form flavin adenine dinucleotide (FAD) coenzyme. The sequence is that of Probable FAD synthase from Caenorhabditis briggsae.